The following is a 470-amino-acid chain: NADH-quinone oxidoreductase subunit D (470 aa).

The segment covering Met-1–Thr-18 has biased composition (low complexity). The segment at Met-1–Ala-37 is disordered.

It belongs to the complex I 49 kDa subunit family. In terms of assembly, NDH-1 is composed of 14 different subunits. Subunits NuoB, C, D, E, F, and G constitute the peripheral sector of the complex.

The protein localises to the cell membrane. It carries out the reaction a quinone + NADH + 5 H(+)(in) = a quinol + NAD(+) + 4 H(+)(out). Functionally, NDH-1 shuttles electrons from NADH, via FMN and iron-sulfur (Fe-S) centers, to quinones in the respiratory chain. The immediate electron acceptor for the enzyme in this species is believed to be a menaquinone. Couples the redox reaction to proton translocation (for every two electrons transferred, four hydrogen ions are translocated across the cytoplasmic membrane), and thus conserves the redox energy in a proton gradient. The protein is NADH-quinone oxidoreductase subunit D of Frankia alni (strain DSM 45986 / CECT 9034 / ACN14a).